A 335-amino-acid chain; its full sequence is Glyceraldehyde-3-phosphate dehydrogenase (335 aa).

NAD(+) contacts are provided by residues 10-11, Asp31, Arg75, and Thr122; that span reads RI. D-glyceraldehyde 3-phosphate is bound by residues 152-154 and Thr183; that span reads SCT. The Nucleophile role is filled by Cys153. An NAD(+)-binding site is contributed by Asn184. D-glyceraldehyde 3-phosphate is bound by residues Arg198, 211-212, and Arg234; that span reads TG. Position 318 (Asn318) interacts with NAD(+).

Belongs to the glyceraldehyde-3-phosphate dehydrogenase family. As to quaternary structure, homotetramer.

The protein resides in the cytoplasm. It catalyses the reaction D-glyceraldehyde 3-phosphate + phosphate + NAD(+) = (2R)-3-phospho-glyceroyl phosphate + NADH + H(+). It participates in carbohydrate degradation; glycolysis; pyruvate from D-glyceraldehyde 3-phosphate: step 1/5. Functionally, catalyzes the oxidative phosphorylation of glyceraldehyde 3-phosphate (G3P) to 1,3-bisphosphoglycerate (BPG) using the cofactor NAD. The first reaction step involves the formation of a hemiacetal intermediate between G3P and a cysteine residue, and this hemiacetal intermediate is then oxidized to a thioester, with concomitant reduction of NAD to NADH. The reduced NADH is then exchanged with the second NAD, and the thioester is attacked by a nucleophilic inorganic phosphate to produce BPG. The chain is Glyceraldehyde-3-phosphate dehydrogenase (gap) from Borreliella burgdorferi (strain ATCC 35210 / DSM 4680 / CIP 102532 / B31) (Borrelia burgdorferi).